Consider the following 612-residue polypeptide: DNA mismatch repair protein MutL (612 aa).

It belongs to the DNA mismatch repair MutL/HexB family.

This protein is involved in the repair of mismatches in DNA. It is required for dam-dependent methyl-directed DNA mismatch repair. May act as a 'molecular matchmaker', a protein that promotes the formation of a stable complex between two or more DNA-binding proteins in an ATP-dependent manner without itself being part of a final effector complex. The chain is DNA mismatch repair protein MutL from Afipia carboxidovorans (strain ATCC 49405 / DSM 1227 / KCTC 32145 / OM5) (Oligotropha carboxidovorans).